Consider the following 296-residue polypeptide: Small ribosomal subunit biogenesis GTPase RsgA (296 aa).

One can recognise a CP-type G domain in the interval 65–223; that stretch reads INRIGRPAVA…LADTPGFSSI (159 aa). GTP-binding positions include 114–117 and 166–174; these read SKAD and GQSGAGKST. Positions 247, 252, 254, and 260 each coordinate Zn(2+).

Belongs to the TRAFAC class YlqF/YawG GTPase family. RsgA subfamily. In terms of assembly, monomer. Associates with 30S ribosomal subunit, binds 16S rRNA. Zn(2+) serves as cofactor.

The protein localises to the cytoplasm. Its function is as follows. One of several proteins that assist in the late maturation steps of the functional core of the 30S ribosomal subunit. Helps release RbfA from mature subunits. May play a role in the assembly of ribosomal proteins into the subunit. Circularly permuted GTPase that catalyzes slow GTP hydrolysis, GTPase activity is stimulated by the 30S ribosomal subunit. The sequence is that of Small ribosomal subunit biogenesis GTPase RsgA from Lactobacillus acidophilus (strain ATCC 700396 / NCK56 / N2 / NCFM).